The primary structure comprises 459 residues: uncharacterized protein (459 aa).

Residues 9-67 (KLEVGQTFPVTIKRLGINGEGVGYFKRQVVFIPGALPGEEVVAETTKIQRGFAEAKVKK) enclose the TRAM domain. Cys-80, Cys-86, Cys-89, and Cys-168 together coordinate [4Fe-4S] cluster. S-adenosyl-L-methionine is bound by residues Gln-292, Tyr-321, Asp-342, and Asp-390. Cys-417 serves as the catalytic Nucleophile.

It belongs to the class I-like SAM-binding methyltransferase superfamily. RNA M5U methyltransferase family.

This is an uncharacterized protein from Bacillus cereus (strain ATCC 10987 / NRS 248).